Reading from the N-terminus, the 190-residue chain is Orotate phosphoribosyltransferase (190 aa).

Glu114 to Ser122 contributes to the 5-phospho-alpha-D-ribose 1-diphosphate binding site. Residues Thr118 and Arg146 each coordinate orotate.

It belongs to the purine/pyrimidine phosphoribosyltransferase family. PyrE subfamily. As to quaternary structure, homodimer. Requires Mg(2+) as cofactor.

It carries out the reaction orotidine 5'-phosphate + diphosphate = orotate + 5-phospho-alpha-D-ribose 1-diphosphate. It participates in pyrimidine metabolism; UMP biosynthesis via de novo pathway; UMP from orotate: step 1/2. Functionally, catalyzes the transfer of a ribosyl phosphate group from 5-phosphoribose 1-diphosphate to orotate, leading to the formation of orotidine monophosphate (OMP). The chain is Orotate phosphoribosyltransferase from Pelotomaculum thermopropionicum (strain DSM 13744 / JCM 10971 / SI).